Here is a 168-residue protein sequence, read N- to C-terminus: Putative F-box protein At1g30945 (168 aa).

The F-box domain occupies 5 to 52 (KTFDSISNDLFLEILLRLSTKSIDRSRCVSKQWASILCSQDFTESEKF).

This Arabidopsis thaliana (Mouse-ear cress) protein is Putative F-box protein At1g30945.